Consider the following 224-residue polypeptide: BTB/POZ domain-containing protein At5g48510 (224 aa).

Residues 24–98 enclose the BTB domain; sequence VDVMLKAKNS…ICSDGSMLSA (75 aa).

Interacts with CUL3A.

It participates in protein modification; protein ubiquitination. In terms of biological role, may act as a substrate-specific adapter of an E3 ubiquitin-protein ligase complex (CUL3-RBX1-BTB) which mediates the ubiquitination and subsequent proteasomal degradation of target proteins. In Arabidopsis thaliana (Mouse-ear cress), this protein is BTB/POZ domain-containing protein At5g48510.